The primary structure comprises 594 residues: Phostensin (594 aa).

Composition is skewed to basic and acidic residues over residues 18–33 (EEAAVRGREKAERDRL) and 109–125 (VLGDRKAGPLEVLERRS). 2 disordered regions span residues 18–238 (EEAA…PTDV) and 294–485 (VQDI…GKKR). Phosphoserine is present on residues S126, S134, S174, and S194. Basic and acidic residues-rich tracts occupy residues 133-155 (QSPKGRESREERLSPRESRDRRL) and 167-190 (SLRDWRQSPAEARDLSSRPAEAQK). Phosphothreonine is present on T198. Phosphoserine is present on S224. A compositionally biased stretch (acidic residues) spans 353-364 (EAEEEAEKEEAE). Pro residues predominate over residues 403-421 (PRPPTPAPLSPPPSAPTAP). Phosphoserine is present on S412. An N6-acetyllysine modification is found at K437. S510 bears the Phosphoserine mark. The disordered stretch occupies residues 531–577 (YQYPSESSVLEDLGPEPETPIAPLATQPDEEEEEEEEEEELLLQPGL). Acidic residues predominate over residues 558–571 (PDEEEEEEEEEEEL).

As to quaternary structure, interacts with Protein phosphatase 1 (PP1).

It localises to the cytoplasm. The protein localises to the cytoskeleton. Its function is as follows. May target protein phosphatase 1 to F-actin cytoskeleton. The chain is Phostensin (Ppp1r18) from Mus musculus (Mouse).